The sequence spans 225 residues: Uracil-DNA glycosylase (225 aa).

D65 serves as the catalytic Proton acceptor.

The protein belongs to the uracil-DNA glycosylase (UDG) superfamily. UNG family.

Its subcellular location is the cytoplasm. The enzyme catalyses Hydrolyzes single-stranded DNA or mismatched double-stranded DNA and polynucleotides, releasing free uracil.. Excises uracil residues from the DNA which can arise as a result of misincorporation of dUMP residues by DNA polymerase or due to deamination of cytosine. The polypeptide is Uracil-DNA glycosylase (Bacillus anthracis (strain A0248)).